Consider the following 688-residue polypeptide: ERI1 exoribonuclease 2 (688 aa).

The Exonuclease domain maps to Leu-37–Ala-226. Mg(2+) is bound by residues Asp-41, Glu-43, and Asp-156. Glu-43 (proton acceptor) is an active-site residue. AMP is bound at residue Glu-43. The Proton acceptor role is filled by His-213. His-213 is a binding site for AMP. Asp-218 is a binding site for Mg(2+). The span at Val-337–Leu-360 shows a compositional bias: polar residues. 2 disordered regions span residues Val-337 to Lys-367 and Asp-523 to Gln-546. Zn(2+)-binding residues include Cys-594, Cys-596, Cys-619, and Cys-631. A GRF-type zinc finger spans residues Cys-594–Leu-640.

It belongs to the ERI2 family. Mg(2+) serves as cofactor.

The protein is ERI1 exoribonuclease 2 (Eri2) of Mus musculus (Mouse).